The primary structure comprises 693 residues: Ion-translocating oxidoreductase complex subunit C (693 aa).

2 consecutive 4Fe-4S ferredoxin-type domains span residues 368–397 (MEPV…QQLY) and 407–436 (KARD…VQYY). [4Fe-4S] cluster-binding residues include C377, C380, C383, C387, C416, C419, C422, and C426. A compositionally biased stretch (basic and acidic residues) spans 539–548 (REERVREKQS). The disordered stretch occupies residues 539-564 (REERVREKQSQQETPATEVTPEELDP).

It belongs to the 4Fe4S bacterial-type ferredoxin family. RnfC subfamily. As to quaternary structure, the complex is composed of six subunits: RnfA, RnfB, RnfC, RnfD, RnfE and RnfG. The cofactor is [4Fe-4S] cluster.

It is found in the cell inner membrane. Its function is as follows. Part of a membrane-bound complex that couples electron transfer with translocation of ions across the membrane. This is Ion-translocating oxidoreductase complex subunit C from Pectobacterium atrosepticum (strain SCRI 1043 / ATCC BAA-672) (Erwinia carotovora subsp. atroseptica).